Reading from the N-terminus, the 1347-residue chain is DExH-box ATP-dependent RNA helicase DExH11 (1347 aa).

The disordered stretch occupies residues 263 to 291 (ELEGDDHTAGSESPKAEAEPDAKASISNE). The span at 267-284 (DDHTAGSESPKAEAEPDA) shows a compositional bias: basic and acidic residues. The 156-residue stretch at 369–524 (ICCLEKGESV…WIGRTKQKEI (156 aa)) folds into the Helicase ATP-binding domain. Residue 382–389 (AHTSAGKT) participates in ATP binding. The DEVH box signature appears at 472–475 (DEVH). Positions 566–625 (SQKKKNSNAVSVAPKQQMGSSAHQDGSKSQKHEAHSRGKQNKHSSVKDVGKSSYSGNSQN) are disordered. The segment covering 590 to 601 (DGSKSQKHEAHS) has biased composition (basic and acidic residues). One can recognise a Helicase C-terminal domain in the interval 673 to 838 (DLTSSSEKSE…LTYIMILHLL (166 aa)).

Belongs to the DExH box helicase family. SKI2 subfamily. As to quaternary structure, component of the cytoplasmic SKI complex, which consists of SKI2, SKI3 and VIP3/SKI8. In terms of tissue distribution, expressed in vascular tissues of leaves and roots of young plants.

The protein resides in the cytoplasm. It catalyses the reaction ATP + H2O = ADP + phosphate + H(+). In terms of biological role, component of the SKI complex which is thought to be involved in exosome-mediated RNA decay and associates with transcriptionally active genes in a manner dependent on PAF1 complex (PAF1C). Involved in the regulation of potassium deprivation stress response. This is DExH-box ATP-dependent RNA helicase DExH11 from Arabidopsis thaliana (Mouse-ear cress).